A 210-amino-acid chain; its full sequence is Uracil phosphoribosyltransferase (210 aa).

5-phospho-alpha-D-ribose 1-diphosphate contacts are provided by residues arginine 78, arginine 103, and 130-138 (DPMLATGGT). Residues isoleucine 193 and 198–200 (GDA) each bind uracil. A 5-phospho-alpha-D-ribose 1-diphosphate-binding site is contributed by aspartate 199.

This sequence belongs to the UPRTase family. Requires Mg(2+) as cofactor.

It carries out the reaction UMP + diphosphate = 5-phospho-alpha-D-ribose 1-diphosphate + uracil. The protein operates within pyrimidine metabolism; UMP biosynthesis via salvage pathway; UMP from uracil: step 1/1. Its activity is regulated as follows. Allosterically activated by GTP. Its function is as follows. Catalyzes the conversion of uracil and 5-phospho-alpha-D-ribose 1-diphosphate (PRPP) to UMP and diphosphate. The sequence is that of Uracil phosphoribosyltransferase from Stenotrophomonas maltophilia (strain K279a).